We begin with the raw amino-acid sequence, 522 residues long: MISAVLDTQGDHPQQQAGDRAAPSVPVPGNKTVLPLARPNPNRKRVLFVTSEIADLVKTGGLGDVSAALPRAMAHLHDVRVLIPGYPQVLHSENPIHIIGELGGHAALPACKIGRMDMPDGLVIYVLICPELYEREGTPYGANNGRDWPDNHIRFARLGLAAADIAANLAQIHWCPDLVHAHDWPAGLAPAYMHWRGQRTPTLFTIHNLAYQGVVSLASCPELGIPEHALQQEGMEFYGKLSFLKAGMAYASHITTVSATYAQEITTPAFGCGLDGFLASKTQQGLLSGIPNGIDESWDAATDAHLLTPFSIGDWDGKAANAAHVRQMFGLDASSGPLFAVVSRLVYQKGLDLTEAVAEFIVQSGGQIAIIGRGEPEEEQSMRALARRFPGRIGVHIGFNETDARRMFAGSDFLLMPSRYEPCGLSQMYAQRFGSLPVARNTGGLADTIENGVTGFLFDESTVASYQEALTRAFKVFAYPALLNAMRCRAMAAPFNWCKAVEPYAELYEQLVAKALGQAARQ.

The segment at 1–29 is disordered; it reads MISAVLDTQGDHPQQQAGDRAAPSVPVPG. An ADP-alpha-D-glucose-binding site is contributed by Lys-58.

This sequence belongs to the glycosyltransferase 1 family. Bacterial/plant glycogen synthase subfamily.

It carries out the reaction [(1-&gt;4)-alpha-D-glucosyl](n) + ADP-alpha-D-glucose = [(1-&gt;4)-alpha-D-glucosyl](n+1) + ADP + H(+). Its pathway is glycan biosynthesis; glycogen biosynthesis. In terms of biological role, synthesizes alpha-1,4-glucan chains using ADP-glucose. The sequence is that of Glycogen synthase from Pseudomonas fluorescens (strain ATCC BAA-477 / NRRL B-23932 / Pf-5).